Consider the following 414-residue polypeptide: MKTYLVGGAVRDSLLEIPVVDRDWVVVGAAPSELTALGYQQVGKDFPVFLNPKTHEEYALARTERKSGQGYTGFTCYAAPDVTLEEDLQRRDLTINAIARSDDGELIDPFNGVADLQARVLRHVSDAFGEDPLRVLRVARFAARFAHLGFSIAPETAELMRQMARSGELAALTAERVWKETEKALQSQSPQVYFQVLRDCEALGVLFPEIDTLFGVPAPAKWHPEIDTGIHTLMTLAIAAQLSPEVDVRFSALCHDLGKGQTPKELWPHHHGHGPAGVLLVEALCRRLRVPNPVRDLAKLVAEYHDLIHTVNKLRPETLLKLFDAVDVWRKPQRLEQMILTSEADARGRTGFEDNPYPQGDYLRQAFQVANAVSVKEVVASGLQGLAVRDELKRRRQQALAEWKQTQDIPLDQA.

ATP is bound by residues glycine 8 and arginine 11. CTP contacts are provided by glycine 8 and arginine 11. Residues aspartate 21 and aspartate 23 each coordinate Mg(2+). Arginine 91, arginine 137, and arginine 140 together coordinate ATP. Residues arginine 91, arginine 137, and arginine 140 each contribute to the CTP site. In terms of domain architecture, HD spans 228-329; it reads TGIHTLMTLA…LKLFDAVDVW (102 aa).

Belongs to the tRNA nucleotidyltransferase/poly(A) polymerase family. Bacterial CCA-adding enzyme type 1 subfamily. As to quaternary structure, monomer. Can also form homodimers and oligomers. The cofactor is Mg(2+). Ni(2+) serves as cofactor.

It catalyses the reaction a tRNA precursor + 2 CTP + ATP = a tRNA with a 3' CCA end + 3 diphosphate. It carries out the reaction a tRNA with a 3' CCA end + 2 CTP + ATP = a tRNA with a 3' CCACCA end + 3 diphosphate. Catalyzes the addition and repair of the essential 3'-terminal CCA sequence in tRNAs without using a nucleic acid template. Adds these three nucleotides in the order of C, C, and A to the tRNA nucleotide-73, using CTP and ATP as substrates and producing inorganic pyrophosphate. tRNA 3'-terminal CCA addition is required both for tRNA processing and repair. Also involved in tRNA surveillance by mediating tandem CCA addition to generate a CCACCA at the 3' terminus of unstable tRNAs. While stable tRNAs receive only 3'-terminal CCA, unstable tRNAs are marked with CCACCA and rapidly degraded. The chain is Multifunctional CCA protein from Serratia proteamaculans (strain 568).